Consider the following 651-residue polypeptide: Probable potassium transport system protein Kup (651 aa).

A compositionally biased stretch (basic and acidic residues) spans 1–16; the sequence is MRDSPGSKSSSERWHD. The tract at residues 1-31 is disordered; that stretch reads MRDSPGSKSSSERWHDTMAVSDPTAEGKDES. The next 12 helical transmembrane spans lie at 38–58, 74–94, 129–149, 168–188, 197–217, 232–252, 276–296, 309–329, 366–386, 396–416, 423–443, and 448–468; these read FWAL…TSPL, VTPA…FIVV, LLLL…SMIT, LQDY…AVQS, AFAP…VLHI, AIHF…LVFL, WFCL…ALIL, LAPA…TVIA, IYLP…VLLF, YGIA…VVVW, PAAA…FFSA, and LFDG…LIWT.

The protein belongs to the HAK/KUP transporter (TC 2.A.72) family.

Its subcellular location is the cell inner membrane. The enzyme catalyses K(+)(in) + H(+)(in) = K(+)(out) + H(+)(out). In terms of biological role, transport of potassium into the cell. Likely operates as a K(+):H(+) symporter. This Nitrobacter winogradskyi (strain ATCC 25391 / DSM 10237 / CIP 104748 / NCIMB 11846 / Nb-255) protein is Probable potassium transport system protein Kup.